Reading from the N-terminus, the 363-residue chain is GTPase Obg (363 aa).

The Obg domain maps to 1-159 (MKFIDEAKIY…LELRLELRVL (159 aa)). The region spanning 160–338 (ADVGLLGLPN…LIYAISEALE (179 aa)) is the OBG-type G domain. GTP-binding positions include 166–173 (GLPNAGKS), 191–195 (FTTLH), 213–216 (DVPG), 284–287 (NKLD), and 319–321 (AAI). Residues serine 173 and threonine 193 each contribute to the Mg(2+) site. The interval 342–363 (RPEIGDLDDNDEDSDEIIRDTE) is disordered. Residues 346–356 (GDLDDNDEDSD) are compositionally biased toward acidic residues.

It belongs to the TRAFAC class OBG-HflX-like GTPase superfamily. OBG GTPase family. As to quaternary structure, monomer. Mg(2+) serves as cofactor.

The protein localises to the cytoplasm. Its function is as follows. An essential GTPase which binds GTP, GDP and possibly (p)ppGpp with moderate affinity, with high nucleotide exchange rates and a fairly low GTP hydrolysis rate. Plays a role in control of the cell cycle, stress response, ribosome biogenesis and in those bacteria that undergo differentiation, in morphogenesis control. The protein is GTPase Obg of Dechloromonas aromatica (strain RCB).